The sequence spans 748 residues: Rho GTPase-activating protein 24 (748 aa).

The PH domain occupies 18 to 124 (NATKCGWLRK…WVKSIRRVIW (107 aa)). The Rho-GAP domain maps to 134-328 (QKLEDTVRYE…VMISKHDRLF (195 aa)). The disordered stretch occupies residues 328-476 (FPKDTEPQSK…SSGTKMGTHS (149 aa)). Polar residues-rich tracts occupy residues 335 to 347 (QSKP…SNNN) and 356 to 368 (GQLQ…NTKE). Phosphoserine occurs at positions 369, 391, 396, 398, 402, 413, 415, and 437. The segment covering 369 to 381 (SPVRRCSWDKPES) has biased composition (basic and acidic residues). A compositionally biased stretch (polar residues) spans 382-405 (PQRSSMDNGSPTALSGSKTNSPRN). Polar residues predominate over residues 432–476 (IVTNGSFSSSNAEGVEKTQTTPNGSLQARRTSSLKSSGTKMGTHS). Threonine 452 bears the Phosphothreonine mark. Residue serine 495 is modified to Phosphoserine. The segment at 582 to 640 (DFYGGNFEDPVLDGPPQDDLSHPGDYENKSDRRSVGGRSSRATSSSDNSETFVGNTSSN) is disordered. Residues 600-615 (DLSHPGDYENKSDRRS) are compositionally biased toward basic and acidic residues. The span at 617–630 (GGRSSRATSSSDNS) shows a compositional bias: low complexity. Positions 631–640 (ETFVGNTSSN) are enriched in polar residues. Positions 649–729 (SSLKQEMTKQ…KEMEQFFSTF (81 aa)) form a coiled coil.

As to quaternary structure, interacts with FLNA. In terms of processing, phosphorylated by ROCK, leading to activate the RacGAP activity.

Its subcellular location is the cytoplasm. It localises to the cytoskeleton. The protein localises to the cell junction. It is found in the adherens junction. The protein resides in the focal adhesion. Its subcellular location is the cell projection. In terms of biological role, rho GTPase-activating protein involved in cell polarity, cell morphology and cytoskeletal organization. Acts as a GTPase activator for the Rac-type GTPase by converting it to an inactive GDP-bound state. Controls actin remodeling by inactivating Rac downstream of Rho leading to suppress leading edge protrusion and promotes cell retraction to achieve cellular polarity. Able to suppress RAC1 and CDC42 activity in vitro. Overexpression induces cell rounding with partial or complete disruption of actin stress fibers and formation of membrane ruffles, lamellipodia, and filopodia. Isoform 2 is a vascular cell-specific GAP involved in modulation of angiogenesis. The chain is Rho GTPase-activating protein 24 (Arhgap24) from Rattus norvegicus (Rat).